The following is a 276-amino-acid chain: Dermonecrotic toxin LlSicTox-alphaIV1ii (276 aa).

H5 is an active-site residue. Positions 25 and 27 each coordinate Mg(2+). H41 functions as the Nucleophile in the catalytic mechanism. Intrachain disulfides connect C45–C51 and C47–C193. Position 85 (D85) interacts with Mg(2+).

Belongs to the arthropod phospholipase D family. Class II subfamily. It depends on Mg(2+) as a cofactor. As to expression, expressed by the venom gland.

It localises to the secreted. It catalyses the reaction an N-(acyl)-sphingosylphosphocholine = an N-(acyl)-sphingosyl-1,3-cyclic phosphate + choline. The enzyme catalyses an N-(acyl)-sphingosylphosphoethanolamine = an N-(acyl)-sphingosyl-1,3-cyclic phosphate + ethanolamine. It carries out the reaction a 1-acyl-sn-glycero-3-phosphocholine = a 1-acyl-sn-glycero-2,3-cyclic phosphate + choline. The catalysed reaction is a 1-acyl-sn-glycero-3-phosphoethanolamine = a 1-acyl-sn-glycero-2,3-cyclic phosphate + ethanolamine. Its function is as follows. Dermonecrotic toxins cleave the phosphodiester linkage between the phosphate and headgroup of certain phospholipids (sphingolipid and lysolipid substrates), forming an alcohol (often choline) and a cyclic phosphate. This toxin acts on sphingomyelin (SM). It may also act on ceramide phosphoethanolamine (CPE), lysophosphatidylcholine (LPC) and lysophosphatidylethanolamine (LPE), but not on lysophosphatidylserine (LPS), and lysophosphatidylglycerol (LPG). It acts by transphosphatidylation, releasing exclusively cyclic phosphate products as second products. Induces dermonecrosis, hemolysis, increased vascular permeability, edema, inflammatory response, and platelet aggregation. This is Dermonecrotic toxin LlSicTox-alphaIV1ii from Loxosceles laeta (South American recluse spider).